Reading from the N-terminus, the 81-residue chain is MDPTIAAGALIGGGLIMAGGAIGAGIGDGIAGNALISGIARQPEAQGRLFTPFFITVGLVEAAYFINLAFMALFVFATPVG.

Helical transmembrane passes span 5-25 (IAAGALIGGGLIMAGGAIGAG) and 57-77 (VGLVEAAYFINLAFMALFVFA).

Belongs to the ATPase C chain family. In terms of assembly, F-type ATPases have 2 components, F(1) - the catalytic core - and F(0) - the membrane proton channel. F(1) has five subunits: alpha(3), beta(3), gamma(1), delta(1), epsilon(1). F(0) has three main subunits: a(1), b(2) and c(10-14). The alpha and beta chains form an alternating ring which encloses part of the gamma chain. F(1) is attached to F(0) by a central stalk formed by the gamma and epsilon chains, while a peripheral stalk is formed by the delta and b chains.

The protein localises to the cell membrane. Functionally, f(1)F(0) ATP synthase produces ATP from ADP in the presence of a proton or sodium gradient. F-type ATPases consist of two structural domains, F(1) containing the extramembraneous catalytic core and F(0) containing the membrane proton channel, linked together by a central stalk and a peripheral stalk. During catalysis, ATP synthesis in the catalytic domain of F(1) is coupled via a rotary mechanism of the central stalk subunits to proton translocation. Key component of the F(0) channel; it plays a direct role in translocation across the membrane. A homomeric c-ring of between 10-14 subunits forms the central stalk rotor element with the F(1) delta and epsilon subunits. In Mycolicibacterium gilvum (strain PYR-GCK) (Mycobacterium gilvum (strain PYR-GCK)), this protein is ATP synthase subunit c.